We begin with the raw amino-acid sequence, 370 residues long: GTPase Obg (370 aa).

One can recognise an Obg domain in the interval 1–159 (MKFIDEARIE…RKLKLELKVL (159 aa)). Positions 129 to 148 (HFKSSTNRAPRQKTNGKSGE) are disordered. Residues 130–145 (FKSSTNRAPRQKTNGK) show a composition bias toward polar residues. The OBG-type G domain maps to 160–334 (ADVGLLGMPN…LCYSLQDYLD (175 aa)). GTP-binding positions include 166-173 (GMPNAGKS), 191-195 (FTTLH), 213-216 (DIPG), 284-287 (NKVD), and 315-317 (SAL). The Mg(2+) site is built by Ser173 and Thr193.

This sequence belongs to the TRAFAC class OBG-HflX-like GTPase superfamily. OBG GTPase family. In terms of assembly, monomer. Mg(2+) serves as cofactor.

Its subcellular location is the cytoplasm. An essential GTPase which binds GTP, GDP and possibly (p)ppGpp with moderate affinity, with high nucleotide exchange rates and a fairly low GTP hydrolysis rate. Plays a role in control of the cell cycle, stress response, ribosome biogenesis and in those bacteria that undergo differentiation, in morphogenesis control. This is GTPase Obg from Polynucleobacter necessarius subsp. necessarius (strain STIR1).